We begin with the raw amino-acid sequence, 197 residues long: dITP/XTP pyrophosphatase (197 aa).

9–14 lines the substrate pocket; sequence TNNLNK. Residues Glu-42 and Asp-71 each coordinate Mg(2+). Asp-71 (proton acceptor) is an active-site residue. Substrate-binding positions include Ser-72, 153–156, Lys-176, and 181–182; these read FGYD and HR.

It belongs to the HAM1 NTPase family. As to quaternary structure, homodimer. Requires Mg(2+) as cofactor.

It carries out the reaction XTP + H2O = XMP + diphosphate + H(+). It catalyses the reaction dITP + H2O = dIMP + diphosphate + H(+). The catalysed reaction is ITP + H2O = IMP + diphosphate + H(+). Pyrophosphatase that catalyzes the hydrolysis of nucleoside triphosphates to their monophosphate derivatives, with a high preference for the non-canonical purine nucleotides XTP (xanthosine triphosphate), dITP (deoxyinosine triphosphate) and ITP. Seems to function as a house-cleaning enzyme that removes non-canonical purine nucleotides from the nucleotide pool, thus preventing their incorporation into DNA/RNA and avoiding chromosomal lesions. The protein is dITP/XTP pyrophosphatase of Leptospira interrogans serogroup Icterohaemorrhagiae serovar copenhageni (strain Fiocruz L1-130).